The primary structure comprises 685 residues: Methionine--tRNA ligase (685 aa).

The 'HIGH' region signature appears at 12–22 (PYANGSIHLGH). Cysteine 143, cysteine 146, cysteine 156, and cysteine 159 together coordinate Zn(2+). A 'KMSKS' region motif is present at residues 339-343 (KMSKS). Lysine 342 contributes to the ATP binding site. One can recognise a tRNA-binding domain in the interval 582–685 (DFMKIDMRVA…AGAQPGDKVG (104 aa)).

Belongs to the class-I aminoacyl-tRNA synthetase family. MetG type 1 subfamily. In terms of assembly, homodimer. Zn(2+) serves as cofactor.

Its subcellular location is the cytoplasm. The enzyme catalyses tRNA(Met) + L-methionine + ATP = L-methionyl-tRNA(Met) + AMP + diphosphate. Is required not only for elongation of protein synthesis but also for the initiation of all mRNA translation through initiator tRNA(fMet) aminoacylation. The polypeptide is Methionine--tRNA ligase (Neisseria meningitidis serogroup A / serotype 4A (strain DSM 15465 / Z2491)).